Reading from the N-terminus, the 912-residue chain is Phosphoenolpyruvate carboxylase (912 aa).

Residues histidine 138 and lysine 575 contribute to the active site.

It belongs to the PEPCase type 1 family. Mg(2+) is required as a cofactor.

It catalyses the reaction oxaloacetate + phosphate = phosphoenolpyruvate + hydrogencarbonate. In terms of biological role, forms oxaloacetate, a four-carbon dicarboxylic acid source for the tricarboxylic acid cycle. The protein is Phosphoenolpyruvate carboxylase of Lactobacillus helveticus (strain DPC 4571).